Reading from the N-terminus, the 267-residue chain is Trehalose-phosphate phosphatase (267 aa).

Residue Asp20 is the Nucleophile of the active site. 3 residues coordinate Mg(2+): Asp20, Asp22, and Asp198. Residue 20 to 22 (DLD) coordinates substrate.

The protein belongs to the trehalose phosphatase family. Mg(2+) serves as cofactor.

It catalyses the reaction alpha,alpha-trehalose 6-phosphate + H2O = alpha,alpha-trehalose + phosphate. Its pathway is glycan biosynthesis; trehalose biosynthesis. Its function is as follows. Removes the phosphate from trehalose 6-phosphate to produce free trehalose. In Salmonella typhimurium (strain LT2 / SGSC1412 / ATCC 700720), this protein is Trehalose-phosphate phosphatase (otsB).